The chain runs to 229 residues: Uracil-DNA glycosylase (229 aa).

D72 acts as the Proton acceptor in catalysis.

Belongs to the uracil-DNA glycosylase (UDG) superfamily. UNG family.

Its subcellular location is the cytoplasm. It carries out the reaction Hydrolyzes single-stranded DNA or mismatched double-stranded DNA and polynucleotides, releasing free uracil.. In terms of biological role, excises uracil residues from the DNA which can arise as a result of misincorporation of dUMP residues by DNA polymerase or due to deamination of cytosine. This chain is Uracil-DNA glycosylase, found in Dichelobacter nodosus (strain VCS1703A).